The primary structure comprises 90 residues: Probable Fe(2+)-trafficking protein (90 aa).

The protein belongs to the Fe(2+)-trafficking protein family.

Its function is as follows. Could be a mediator in iron transactions between iron acquisition and iron-requiring processes, such as synthesis and/or repair of Fe-S clusters in biosynthetic enzymes. The protein is Probable Fe(2+)-trafficking protein of Vibrio atlanticus (strain LGP32) (Vibrio splendidus (strain Mel32)).